A 333-amino-acid polypeptide reads, in one-letter code: Adenosine deaminase (333 aa).

Zn(2+)-binding residues include His-12 and His-14. Residues His-14, Asp-16, and Gly-170 each contribute to the substrate site. His-197 contacts Zn(2+). Catalysis depends on Glu-200, which acts as the Proton donor. Asp-278 lines the Zn(2+) pocket. Residue Asp-279 coordinates substrate.

The protein belongs to the metallo-dependent hydrolases superfamily. Adenosine and AMP deaminases family. Adenosine deaminase subfamily. Requires Zn(2+) as cofactor.

It catalyses the reaction adenosine + H2O + H(+) = inosine + NH4(+). The enzyme catalyses 2'-deoxyadenosine + H2O + H(+) = 2'-deoxyinosine + NH4(+). Functionally, catalyzes the hydrolytic deamination of adenosine and 2-deoxyadenosine. In Escherichia coli O45:K1 (strain S88 / ExPEC), this protein is Adenosine deaminase.